A 189-amino-acid polypeptide reads, in one-letter code: Peptidyl-tRNA hydrolase (189 aa).

Tyr15 is a tRNA binding site. His20 acts as the Proton acceptor in catalysis. Residues Phe66, Asn68, and Asn114 each contribute to the tRNA site.

This sequence belongs to the PTH family. As to quaternary structure, monomer.

The protein resides in the cytoplasm. It catalyses the reaction an N-acyl-L-alpha-aminoacyl-tRNA + H2O = an N-acyl-L-amino acid + a tRNA + H(+). Its function is as follows. Hydrolyzes ribosome-free peptidyl-tRNAs (with 1 or more amino acids incorporated), which drop off the ribosome during protein synthesis, or as a result of ribosome stalling. Catalyzes the release of premature peptidyl moieties from peptidyl-tRNA molecules trapped in stalled 50S ribosomal subunits, and thus maintains levels of free tRNAs and 50S ribosomes. In Streptococcus pyogenes serotype M3 (strain ATCC BAA-595 / MGAS315), this protein is Peptidyl-tRNA hydrolase.